The chain runs to 274 residues: tRNA pseudouridine synthase A (274 aa).

The active-site Nucleophile is the D54. Y112 lines the substrate pocket.

This sequence belongs to the tRNA pseudouridine synthase TruA family. In terms of assembly, homodimer.

It catalyses the reaction uridine(38/39/40) in tRNA = pseudouridine(38/39/40) in tRNA. Functionally, formation of pseudouridine at positions 38, 39 and 40 in the anticodon stem and loop of transfer RNAs. This Solidesulfovibrio magneticus (strain ATCC 700980 / DSM 13731 / RS-1) (Desulfovibrio magneticus) protein is tRNA pseudouridine synthase A.